Here is a 494-residue protein sequence, read N- to C-terminus: MKYHDLRDFLTLLEQQGELKRITLAVDPHLEMTEIADRTLRAGGPALLFENPKGYAMPVLCNLFGTPRRVAMGMGQEDVTALREVGKLLAFLKEPEPPKGFRDLFDKLPQFKQVLNMPTKRLRGAPCQQKVFSGDDVDLQRIPIMTCWPEDAAPLITWGLTVTRGPHKERQNLGIYRQQLIGKNKLIMRWLSHRGGALDFQEWCAAHPGERFPIAVALGADPATILGAVTPVPDTLSEYAFAGLLRGTKTEVVKCLSSDLEVPASAEIVLEGYIEPGEMAAEGPYGDHTGYYNEVDNFPVFTVTHITQREDAIYHSTYTGRPPDEPAVLGVALNEVFVPILQKQFPEIVDFYLPPEGCSYRLAVVTMKKQYAGHAKRVMMGVWSFLRQFMYTKFVIVCDDDVNARDWNDVIWAITTRMDPARDTVLVENTPIDYLDFASPISGLGSKMGLDATNKWPGETQREWGRPIKKDPEVTARIDAIWDELAIFNDGKGA.

Residue N172 coordinates Mn(2+). Prenylated FMN is bound by residues 175–177, 189–191, and 194–195; these read IYR, RWL, and RG. E238 contacts Mn(2+). The active-site Proton donor is D287.

Belongs to the UbiD family. As to quaternary structure, homohexamer. Prenylated FMN serves as cofactor. It depends on Mn(2+) as a cofactor.

It is found in the cell membrane. The enzyme catalyses a 4-hydroxy-3-(all-trans-polyprenyl)benzoate + H(+) = a 2-(all-trans-polyprenyl)phenol + CO2. Its pathway is cofactor biosynthesis; ubiquinone biosynthesis. Its function is as follows. Catalyzes the decarboxylation of 3-octaprenyl-4-hydroxy benzoate to 2-octaprenylphenol, an intermediate step in ubiquinone biosynthesis. This Citrobacter koseri (strain ATCC BAA-895 / CDC 4225-83 / SGSC4696) protein is 3-octaprenyl-4-hydroxybenzoate carboxy-lyase.